A 674-amino-acid chain; its full sequence is Pre-mRNA-splicing factor cwf4 (674 aa).

16 HAT repeats span residues 50–82 (EFQGRKRKEFEDAIRRNRLAMGHWMRYGQWELD), 84–116 (KEFARARSVFERALDVDSTYIPLWLKYIECEMK), 118–150 (RNINHARNLFDRAVTQLPRVDKLWYKYVYMEEM), 152–183 (GNITGCRQVFERWLKWEPDENCWMSYIRMERR), 185–216 (HENERARGIYERFVVVHPEVTNWLRWARFEEE), 218–253 (GNAANVRQVYLAAIDALGQEFLNERFFIAFAKFEIR), 255–289 (KEYERARTIFKYAIDFMPRSKSMELYKEYTHFEKQ), 299–331 (TVLDKRRLQYEKLLKDSPYDYDTWLDLLKLEES), 333–367 (GDINTIRETYEKAIAKVPEVVEKNAWRRYVYIWLN), 377–413 (KDVDRARKVYQEALKLIPHKKFTFAKLWLMYAMFELR), 415–446 (RKIDVARKTLGRALGMCPKPKLFRGYIEFEDA), 448–480 (KQFDRCRILYEKWILYDPEACAPWLGYAALETK), 482–516 (GDSDRARALYNLAVNQPILETPELVWKAYIDFEFE), 518–549 (MEYGKARSIYQQLLRTAPHVKVWISFANFEIA), 567–608 (TAVV…MHGT), and 610–643 (DTRKHVSSLMPQVVKKRRRLEDGSFEEYLDYLFP).

The protein belongs to the crooked-neck family. In terms of assembly, belongs to the 40S cdc5-associated complex (or cwf complex), a spliceosome sub-complex reminiscent of a late-stage spliceosome composed of the U2, U5 and U6 snRNAs and at least brr2, cdc5, cwf2/prp3, cwf3/syf1, cwf4/syf3, cwf5/ecm2, spp42/cwf6, cwf7/spf27, cwf8, cwf9, cwf10, cwf11, cwf12, prp45/cwf13, cwf14, cwf15, cwf16, cwf17, cwf18, cwf19, cwf20, cwf21, cwf22, cwf23, cwf24, cwf25, cwf26, cyp7/cwf27, cwf28, cwf29/ist3, lea1, msl1, prp5/cwf1, prp10, prp12/sap130, prp17, prp22, sap61, sap62, sap114, sap145, slu7, smb1, smd1, smd3, smf1, smg1 and syf2.

Its subcellular location is the nucleus. Involved in pre-mRNA splicing and cell cycle progression. Required for the spliceosome assembly and initiation of the DNA replication. The protein is Pre-mRNA-splicing factor cwf4 (cwf4) of Schizosaccharomyces pombe (strain 972 / ATCC 24843) (Fission yeast).